The sequence spans 107 residues: Nucleoid-associated protein Rru_A3472 (107 aa).

This sequence belongs to the YbaB/EbfC family. Homodimer.

The protein localises to the cytoplasm. The protein resides in the nucleoid. In terms of biological role, binds to DNA and alters its conformation. May be involved in regulation of gene expression, nucleoid organization and DNA protection. This is Nucleoid-associated protein Rru_A3472 from Rhodospirillum rubrum (strain ATCC 11170 / ATH 1.1.1 / DSM 467 / LMG 4362 / NCIMB 8255 / S1).